The sequence spans 136 residues: Holo-[acyl-carrier-protein] synthase (136 aa).

The Mg(2+) site is built by D8 and E57.

It belongs to the P-Pant transferase superfamily. AcpS family. Requires Mg(2+) as cofactor.

Its subcellular location is the cytoplasm. The enzyme catalyses apo-[ACP] + CoA = holo-[ACP] + adenosine 3',5'-bisphosphate + H(+). Transfers the 4'-phosphopantetheine moiety from coenzyme A to a Ser of acyl-carrier-protein. The protein is Holo-[acyl-carrier-protein] synthase of Methylobacterium radiotolerans (strain ATCC 27329 / DSM 1819 / JCM 2831 / NBRC 15690 / NCIMB 10815 / 0-1).